Reading from the N-terminus, the 98-residue chain is Large ribosomal subunit protein bL27 (98 aa).

The disordered stretch occupies residues 1-22 (MAHKKGTGSTRNGRDSNAQRLG). Polar residues predominate over residues 7–19 (TGSTRNGRDSNAQ).

This sequence belongs to the bacterial ribosomal protein bL27 family.

The sequence is that of Large ribosomal subunit protein bL27 from Nostoc punctiforme (strain ATCC 29133 / PCC 73102).